The sequence spans 346 residues: Putative glycosyltransferase HI_0523 (346 aa).

It belongs to the glycosyltransferase 9 family.

This chain is Putative glycosyltransferase HI_0523, found in Haemophilus influenzae (strain ATCC 51907 / DSM 11121 / KW20 / Rd).